The sequence spans 320 residues: Probable cell division protein WhiA (320 aa).

The H-T-H motif DNA-binding region spans 282-315 (SLEELGRAARPQISKDAVAGRIRRLLQRAEKAEQ).

It belongs to the WhiA family.

Functionally, involved in cell division and chromosome segregation. This chain is Probable cell division protein WhiA, found in Bifidobacterium animalis subsp. lactis (strain AD011).